The primary structure comprises 622 residues: Low affinity potassium transport system protein Kup (622 aa).

A run of 12 helical transmembrane segments spans residues 12–32, 49–69, 101–121, 134–154, 163–183, 213–233, 247–267, 276–296, 337–357, 363–383, 395–415, and 419–439; these read ITLA…LYTL, VFGF…LKYL, FLVI…VITP, IIAP…LTLL, GLVG…LAAL, VSFV…ALYA, WFTV…ALLL, PFFL…ATLA, IYIP…IVSF, LAAA…ILST, FLVA…FSAN, and IVSG…VMTT.

The protein belongs to the HAK/KUP transporter (TC 2.A.72) family.

Its subcellular location is the cell inner membrane. The enzyme catalyses K(+)(in) + H(+)(in) = K(+)(out) + H(+)(out). Responsible for the low-affinity transport of potassium into the cell. Likely operates as a K(+):H(+) symporter. This is Low affinity potassium transport system protein Kup from Enterobacter sp. (strain 638).